A 255-amino-acid polypeptide reads, in one-letter code: Syntaxin-6 (255 aa).

N-acetylserine is present on S2. Position 2 is a phosphoserine (S2). Residues 2 to 168 (SMEDPFFVVK…QAQQQLIVEQ (167 aa)) form a required for interaction with VPS51 region. The Cytoplasmic portion of the chain corresponds to 2–234 (SMEDPFFVVK…VSHMTSDRRQ (233 aa)). A coiled-coil region spans residues 41-74 (EEIDWTTNELRNNLRSIEWDLEDLDETISIVEAN). S129 and S152 each carry phosphoserine. The t-SNARE coiled-coil homology domain maps to 163–225 (QLIVEQQDEQ…DNVMKKLAKV (63 aa)). A helical; Anchor for type IV membrane protein transmembrane segment spans residues 235-255 (WCAIAILFAVLLVVLILFLVL).

Belongs to the syntaxin family. Identified in a complex containing STX6, STX12, VAMP4 and VTI1A. Binds EEA1. Interacts with VPS45A. Interacts with MARCHF2; the interaction promotes MARCHF2-mediated ubiquitination and degradation of CFTR. Interacts with MARCHF3. Interacts with GOPC. Interacts with BLTP3B (via C-terminal coiled-coil domain). Interacts with BAIAP3; this interaction is increased in the presence of calcium. Interacts with VPS13B.

The protein localises to the golgi apparatus membrane. It is found in the golgi apparatus. It localises to the trans-Golgi network membrane. The protein resides in the recycling endosome membrane. SNARE promoting movement of transport vesicles to target membranes. Targets endosomes to the trans-Golgi network, and may therefore function in retrograde trafficking. Together with SNARE STX12, promotes movement of vesicles from endosomes to the cell membrane, and may therefore function in the endocytic recycling pathway. The protein is Syntaxin-6 (STX6) of Homo sapiens (Human).